Reading from the N-terminus, the 444-residue chain is Glycerol-3-phosphate transporter (444 aa).

At 1 to 36 (MLNIFKPAPHIERLDDSKMDAAYKRLRLQVFIGIFI) the chain is on the cytoplasmic side. The helical transmembrane segment at 37–57 (GYAGYYLLRKNFAFAIPYLQE) threads the bilayer. The Extracellular portion of the chain corresponds to 58–63 (QGFSKT). Residues 64 to 84 (ELGLVLAAVSIAYGFSKFIMG) form a helical membrane-spanning segment. Residues 85–93 (MVSDRCNPR) lie on the Cytoplasmic side of the membrane. Residues 94–112 (YFLATGLFLSAIVNILFVS) form a helical membrane-spanning segment. At 113–120 (MPWVTSSV) the chain is on the extracellular side. Residues 121–141 (TIMFIFMFINGWFQGMGWPPC) traverse the membrane as a helical segment. Over 142–160 (GRTMAHWFSISERGTKMSI) the chain is Cytoplasmic. The chain crosses the membrane as a helical span at residues 161–180 (WNVAHNIGGGILAPLVTLGI). The Extracellular portion of the chain corresponds to 181 to 189 (AMFVTWKSV). The chain crosses the membrane as a helical span at residues 190-207 (FFFPAIIAIIISFLIVLL). Over 208–261 (VRDTPQSCGLPPIEEYRNDYPKHAFKNQEKELTTKEILFQYVLNNKFLWYIAFA) the chain is Cytoplasmic. A helical membrane pass occupies residues 262–282 (NVFVYFVRYGVVDWAPTYLTE). Topologically, residues 283-287 (AKGFS) are extracellular. The helical transmembrane segment at 288–308 (PEDSRWSYFLYEYAGIPGTIL) threads the bilayer. The Cytoplasmic portion of the chain corresponds to 309 to 321 (CGWISDRFFKSRR). A helical membrane pass occupies residues 322–341 (APAGVLFMAGVFIAVLVYWL). At 342–346 (NPAGN) the chain is on the extracellular side. A helical membrane pass occupies residues 347–368 (PLVDNIALISIGFLIYGPVMLI). The Cytoplasmic segment spans residues 369 to 387 (GLQAIDLAPKKAAGTAAGL). Residues 388 to 409 (TGFFGYIGGSAFANAIMGFVVD) form a helical membrane-spanning segment. Over 410-414 (RFNWN) the chain is Extracellular. A helical membrane pass occupies residues 415–435 (GGFIMLISSCILAIVFLALTW). At 436-444 (NTGKRAEHV) the chain is on the cytoplasmic side.

The protein belongs to the major facilitator superfamily. Organophosphate:Pi antiporter (OPA) (TC 2.A.1.4) family.

The protein resides in the cell membrane. Functionally, responsible for glycerol-3-phosphate uptake. The sequence is that of Glycerol-3-phosphate transporter (glpT) from Bacillus subtilis (strain 168).